A 1214-amino-acid chain; its full sequence is Formin-D (1214 aa).

The 370-residue stretch at 10-379 (KKEESPQSID…KMNNGESYLD (370 aa)) folds into the GBD/FH3 domain. Residues 401-448 (SGEKAVLIQKEIEDLKKQKKRDQDKLAEKDKLLTKLAKRMRKMEEAIK) are a coiled coil. In terms of domain architecture, FH1 spans 457–544 (NNQIEIESPP…GSGDGIPLPP (88 aa)). Composition is skewed to polar residues over residues 462 to 479 (IESP…TTPG) and 518 to 534 (LDTT…QTEA). 6 disordered regions span residues 462-490 (IESP…TSPV), 507-569 (APNG…SRPP), 868-948 (PKSV…PLKD), 1026-1045 (DKST…IKKS), 1054-1089 (LKKI…DDED), and 1133-1214 (MNLQ…EGEN). The segment covering 541–554 (PLPPGAPPPPPPPG) has biased composition (pro residues). The FH2 domain maps to 562–1037 (PQLCSRPPSI…STQRKNEKER (476 aa)). Over residues 868-877 (PKSVEPKPDD) the composition is skewed to basic and acidic residues. Polar residues predominate over residues 930-940 (QVNTNSTSDSK). Residues 1019–1056 (EIEKSIKDKSTQRKNEKERKEMEIKKSKLEMIHSKLKK) adopt a coiled-coil conformation. Polar residues predominate over residues 1059–1071 (SPSSSNRILASNE). A DAD domain is found at 1065–1095 (RILASNESSPTSSTSSVVHQHDDEDEETIKE). Low complexity predominate over residues 1161–1171 (SSTYSSISSIY). Over residues 1174 to 1214 (EPLDMSDQEDEDEEEEEDEEEEEEEEEGDDDNDNDEEEGEN) the composition is skewed to acidic residues. A coiled-coil region spans residues 1176 to 1207 (LDMSDQEDEDEEEEEDEEEEEEEEEGDDDNDN).

Belongs to the formin homology family. Diaphanous subfamily. As to quaternary structure, interacts (via GBD/FH3 domain) with activated Rho-GTPases.

Its function is as follows. Formins play an important role in the nucleation of actin and the formation of linear actin filaments. The polypeptide is Formin-D (forD) (Dictyostelium discoideum (Social amoeba)).